The chain runs to 447 residues: C4-dicarboxylate transport protein (447 aa).

A run of 9 helical transmembrane segments spans residues 13–33 (SLYFQVITAIVIGVLLGHYWP), 49–69 (LIKMIIAPIIFCTVVVGIAGM), 81–101 (LALLYFEVVSTLALLLGLLIV), 149–169 (AFAKGEMLQVLLFSVMFGFAL), 189–209 (VLFAIVGFIMKVAPIGAFGAM), 227–247 (LMGTFYATCLVFIFGVLGLIA), 302–322 (GYSFNLDGTSIYLTMAAVFIA), 336–356 (TLLAVLLLTSKGAAGVTGSGF), and 357–377 (IVLAATLSAVGGVPVAGLALI). Residues 422–447 (ETEAEANEPEAVLDEIDQHMPVPAAR) are disordered. Residues 425 to 436 (AEANEPEAVLDE) show a composition bias toward acidic residues.

Belongs to the dicarboxylate/amino acid:cation symporter (DAACS) (TC 2.A.23) family.

Its subcellular location is the cell inner membrane. Functionally, responsible for the transport of dicarboxylates such as succinate, fumarate, and malate from the periplasm across the membrane. This is C4-dicarboxylate transport protein from Leptothrix cholodnii (strain ATCC 51168 / LMG 8142 / SP-6) (Leptothrix discophora (strain SP-6)).